The following is a 71-amino-acid chain: Small ribosomal subunit protein bS21 (71 aa).

Residues 37 to 71 are disordered; sequence HYEKPTAERKRKKAAAVKRHMKKLSRDNARRVKLY. Residues 45 to 59 show a composition bias toward basic residues; it reads RKRKKAAAVKRHMKK. Positions 60 to 71 are enriched in basic and acidic residues; sequence LSRDNARRVKLY.

Belongs to the bacterial ribosomal protein bS21 family.

The sequence is that of Small ribosomal subunit protein bS21 from Pseudoalteromonas translucida (strain TAC 125).